A 320-amino-acid chain; its full sequence is tRNA uridine(34) hydroxylase (320 aa).

In terms of domain architecture, Rhodanese spans 123-217; sequence EDEDTVILDA…YGKDPETKGQ (95 aa). The Cysteine persulfide intermediate role is filled by C177.

Belongs to the TrhO family.

The catalysed reaction is uridine(34) in tRNA + AH2 + O2 = 5-hydroxyuridine(34) in tRNA + A + H2O. In terms of biological role, catalyzes oxygen-dependent 5-hydroxyuridine (ho5U) modification at position 34 in tRNAs. The chain is tRNA uridine(34) hydroxylase from Staphylococcus haemolyticus (strain JCSC1435).